A 210-amino-acid polypeptide reads, in one-letter code: MVNCVVKNWQGDEVGQTSLELKVAKEETASHILHRAVVRHLANARQGNASTKTRAEVRGGGRKPWRQKGTGRARAGSNRSPLWRGGGVIFGPKPRDYSQKMNRKERRLALRTALNSKAENLIIVENFAPELPQPKTKELALALTRWGVTEKDKVLLILSEIPENISLSARNICNVKLIRADSINVYDILSASKLVATSDALAKILEVYSD.

The interval glutamine 46–aspartate 96 is disordered. Residues glycine 60–glycine 71 show a composition bias toward basic residues.

The protein belongs to the universal ribosomal protein uL4 family. In terms of assembly, part of the 50S ribosomal subunit.

Functionally, one of the primary rRNA binding proteins, this protein initially binds near the 5'-end of the 23S rRNA. It is important during the early stages of 50S assembly. It makes multiple contacts with different domains of the 23S rRNA in the assembled 50S subunit and ribosome. Its function is as follows. Forms part of the polypeptide exit tunnel. The sequence is that of Large ribosomal subunit protein uL4 from Gloeothece citriformis (strain PCC 7424) (Cyanothece sp. (strain PCC 7424)).